We begin with the raw amino-acid sequence, 183 residues long: MTKQPEDWLDDVPGDDIEDEDDEIIWVSKSEIKRDAEELKRLGAEIVDLGKNALDKIPLDADLRAAIELAQRIKMEGRRRQLQLIGKMLRQRDVEPIRQALDKLKNRHNQQVVLFHKLEQLRDRLIVEGDDAVEEVLSLWPNADRQQLRSLIRNAKKEKEGNKPPKSARQIFQYLRELAENEE.

The protein belongs to the DarP family.

It is found in the cytoplasm. Its function is as follows. Member of a network of 50S ribosomal subunit biogenesis factors which assembles along the 30S-50S interface, preventing incorrect 23S rRNA structures from forming. Promotes peptidyl transferase center (PTC) maturation. In Citrobacter koseri (strain ATCC BAA-895 / CDC 4225-83 / SGSC4696), this protein is Dual-action ribosomal maturation protein DarP.